Here is a 41-residue protein sequence, read N- to C-terminus: Large ribosomal subunit protein bL36 (41 aa).

Belongs to the bacterial ribosomal protein bL36 family.

This Methylorubrum extorquens (strain CM4 / NCIMB 13688) (Methylobacterium extorquens) protein is Large ribosomal subunit protein bL36.